The sequence spans 263 residues: 3-oxo-5-alpha-steroid 4-dehydrogenase 1 (263 aa).

5 consecutive transmembrane segments (helical) span residues 16–33 (MLAALAYLQCAVGCAVLA), 90–110 (ILLAMFLVHYGHRCLIYPFLM), 115–135 (PMPLLACTMAIMFCTFNGYLQ), 155–175 (FLIGFGLWLAGMLINIHSDHI), and 213–233 (YALASWSVQGAAFAFFTFCFL).

The protein belongs to the steroid 5-alpha reductase family.

Its subcellular location is the microsome membrane. It is found in the endoplasmic reticulum membrane. It carries out the reaction a 3-oxo-5alpha-steroid + NADP(+) = a 3-oxo-Delta(4)-steroid + NADPH + H(+). The catalysed reaction is 5alpha-pregnane-3,20-dione + NADP(+) = progesterone + NADPH + H(+). The enzyme catalyses 17beta-hydroxy-5alpha-androstan-3-one + NADP(+) = testosterone + NADPH + H(+). It catalyses the reaction androst-4-ene-3,17-dione + NADPH + H(+) = 5alpha-androstan-3,17-dione + NADP(+). Converts testosterone into 5-alpha-dihydrotestosterone and progesterone or corticosterone into their corresponding 5-alpha-3-oxosteroids. It plays a central role in sexual differentiation and androgen physiology. The protein is 3-oxo-5-alpha-steroid 4-dehydrogenase 1 (SRD5A1) of Macaca fascicularis (Crab-eating macaque).